The chain runs to 1246 residues: DNA-directed RNA polymerase subunit beta (1246 aa).

Residues 1171–1246 are disordered; the sequence is IDDDAGEMSL…EFDGYNDFKA (76 aa). Acidic residues-rich tracts occupy residues 1202–1223 and 1230–1240; these read DEEEKDEDNDSEEALITEEDFE and EYAEDDDEFDG.

This sequence belongs to the RNA polymerase beta chain family. As to quaternary structure, the RNAP catalytic core consists of 2 alpha, 1 beta, 1 beta' and 1 omega subunit. When a sigma factor is associated with the core the holoenzyme is formed, which can initiate transcription.

It catalyses the reaction RNA(n) + a ribonucleoside 5'-triphosphate = RNA(n+1) + diphosphate. Its function is as follows. DNA-dependent RNA polymerase catalyzes the transcription of DNA into RNA using the four ribonucleoside triphosphates as substrates. The sequence is that of DNA-directed RNA polymerase subunit beta from Alkaliphilus metalliredigens (strain QYMF).